A 201-amino-acid chain; its full sequence is Holliday junction branch migration complex subunit RuvA (201 aa).

The segment at 1-63 (MYDYIKGIVK…EDNISLFGFQ (63 aa)) is domain I. Residues 64 to 142 (STEERYLFKK…DVVASEIVYK (79 aa)) are domain II. The segment at 143–153 (AAENDIVTGLS) is flexible linker. The interval 153–201 (SPQLEEAVLALEALGYSTRELKKVIPKMAKENDLTSDAYIKLALRLMTK) is domain III.

This sequence belongs to the RuvA family. As to quaternary structure, homotetramer. Forms an RuvA(8)-RuvB(12)-Holliday junction (HJ) complex. HJ DNA is sandwiched between 2 RuvA tetramers; dsDNA enters through RuvA and exits via RuvB. An RuvB hexamer assembles on each DNA strand where it exits the tetramer. Each RuvB hexamer is contacted by two RuvA subunits (via domain III) on 2 adjacent RuvB subunits; this complex drives branch migration. In the full resolvosome a probable DNA-RuvA(4)-RuvB(12)-RuvC(2) complex forms which resolves the HJ.

The protein resides in the cytoplasm. The RuvA-RuvB-RuvC complex processes Holliday junction (HJ) DNA during genetic recombination and DNA repair, while the RuvA-RuvB complex plays an important role in the rescue of blocked DNA replication forks via replication fork reversal (RFR). RuvA specifically binds to HJ cruciform DNA, conferring on it an open structure. The RuvB hexamer acts as an ATP-dependent pump, pulling dsDNA into and through the RuvAB complex. HJ branch migration allows RuvC to scan DNA until it finds its consensus sequence, where it cleaves and resolves the cruciform DNA. This Listeria innocua serovar 6a (strain ATCC BAA-680 / CLIP 11262) protein is Holliday junction branch migration complex subunit RuvA.